The following is a 386-amino-acid chain: Probable pectin lyase E (386 aa).

The signal sequence occupies residues 1–16 (MKTAVLSLFLALQTYA). A disulfide bridge connects residues C77 and C101. N124 is a glycosylation site (N-linked (GlcNAc...) asparagine). R251 is an active-site residue. A disulfide bond links C326 and C334.

The protein belongs to the polysaccharide lyase 1 family.

It is found in the secreted. The catalysed reaction is Eliminative cleavage of (1-&gt;4)-alpha-D-galacturonan methyl ester to give oligosaccharides with 4-deoxy-6-O-methyl-alpha-D-galact-4-enuronosyl groups at their non-reducing ends.. Pectinolytic enzymes consist of four classes of enzymes: pectin lyase, polygalacturonase, pectin methylesterase and rhamnogalacturonase. Among pectinolytic enzymes, pectin lyase is the most important in depolymerization of pectin, since it cleaves internal glycosidic bonds of highly methylated pectins. This Aspergillus fumigatus (strain CBS 144.89 / FGSC A1163 / CEA10) (Neosartorya fumigata) protein is Probable pectin lyase E (pelE).